We begin with the raw amino-acid sequence, 309 residues long: Nucleoside kinase (309 aa).

Substrate-binding residues include Asp-16, Gly-42, and Asn-46. ATP is bound at residue Gln-108. Substrate-binding positions include 110–112 (SYF) and Gln-166. Residues Asn-189 and 217–223 (KTYGKEG) each bind ATP. Asp-249 provides a ligand contact to substrate. Asp-249 functions as the Proton acceptor in the catalytic mechanism.

It belongs to the carbohydrate kinase PfkB family. Homodimer. Requires Mg(2+) as cofactor.

In terms of biological role, catalyzes the phosphorylation of a wide range of nucleosides to yield nucleoside monophosphates, using ATP, ITP or GTP as phosphate donor. The chain is Nucleoside kinase from Methanothermobacter thermautotrophicus (strain ATCC 29096 / DSM 1053 / JCM 10044 / NBRC 100330 / Delta H) (Methanobacterium thermoautotrophicum).